A 776-amino-acid chain; its full sequence is Serine/threonine-protein kinase SIK1 (776 aa).

Positions 27–278 (YDVERTLGKG…IAQIRQHRWM (252 aa)) constitute a Protein kinase domain. ATP-binding positions include 33-41 (LGKGNFAVV) and lysine 56. Aspartate 149 functions as the Proton acceptor in the catalytic mechanism. At threonine 182 the chain carries Phosphothreonine; by LKB1 and GSK3-beta. The residue at position 186 (serine 186) is a Phosphoserine; by autocatalysis. In terms of domain architecture, UBA spans 303 to 343 (DYNEQVLGIMQALGIDRQRTVESLQNSSYNHFAAIYYLLLE). Threonine 322 is modified (phosphothreonine; by CaMK1). Disordered stretches follow at residues 350–371 (STQPSSRATPAPARQPQLRNSD) and 449–472 (EARQGPSLEEEQEVQEPLPGSTGR). Serine 577 bears the Phosphoserine; by PKA mark. The segment at 586–612 (KAFRQQLRKNARTKGFLGLNKIKGLAR) is RK-rich region. Positions 621–643 (GSRGGMSTFHTPAPSSGLQGCTA) are disordered. Residues 628 to 643 (TFHTPAPSSGLQGCTA) show a composition bias toward polar residues.

It belongs to the protein kinase superfamily. CAMK Ser/Thr protein kinase family. AMPK subfamily. In terms of assembly, interacts (when phosphorylated on Thr-182 and Ser-186) with YWHAZ. Interacts with ATP1A1. It depends on Mg(2+) as a cofactor. Post-translationally, phosphorylated at Thr-182 by STK11/LKB1 in complex with STE20-related adapter-alpha (STRADA) pseudo kinase and CAB39, leading to its activation. Phosphorylation at Thr-182 promotes autophosphorylation at Ser-186, which is required for sustained activity. Autophosphorylation at Ser-186 is maintained by sequential phosphorylation at Thr-182 by GSK3-beta. GSK3-beta cannot initiate phosphorylation at Thr-182, it can only maintain it. Phosphorylation at Ser-577 by PKA promotes translocation to the cytoplasm. Phosphorylation at Thr-322 by CaMK1 following intracellular sodium concentration leads to activation.

The protein localises to the cytoplasm. It localises to the nucleus. It catalyses the reaction L-seryl-[protein] + ATP = O-phospho-L-seryl-[protein] + ADP + H(+). The enzyme catalyses L-threonyl-[protein] + ATP = O-phospho-L-threonyl-[protein] + ADP + H(+). With respect to regulation, activated by phosphorylation on Thr-182. Also activated by phosphorylation on Thr-322 in response to increases in intracellular sodium in parallel with elevations in intracellular calcium through the reversible sodium/calcium exchanger. In terms of biological role, serine/threonine-protein kinase involved in various processes such as cell cycle regulation, gluconeogenesis and lipogenesis regulation, muscle growth and differentiation and tumor suppression. Phosphorylates HDAC4, HDAC5, PPME1, SREBF1, CRTC1/TORC1 and CRTC2/TORC2. Acts as a tumor suppressor and plays a key role in p53/TP53-dependent anoikis, a type of apoptosis triggered by cell detachment: required for phosphorylation of p53/TP53 in response to loss of adhesion and is able to suppress metastasis. Part of a sodium-sensing signaling network, probably by mediating phosphorylation of PPME1: following increases in intracellular sodium, SIK1 is activated by CaMK1 and phosphorylates PPME1 subunit of protein phosphatase 2A (PP2A), leading to dephosphorylation of sodium/potassium-transporting ATPase ATP1A1 and subsequent increase activity of ATP1A1. Acts as a regulator of muscle cells by phosphorylating and inhibiting class II histone deacetylases HDAC4 and HDAC5, leading to promote expression of MEF2 target genes in myocytes. Also required during cardiomyogenesis by regulating the exit of cardiomyoblasts from the cell cycle via down-regulation of CDKN1C/p57Kip2. Acts as a regulator of hepatic gluconeogenesis by phosphorylating and repressing the CREB-specific coactivators CRTC1/TORC1 and CRTC2/TORC2, leading to inhibit CREB activity. Also regulates hepatic lipogenesis by phosphorylating and inhibiting SREBF1. In concert with CRTC1/TORC1, regulates the light-induced entrainment of the circadian clock by attenuating PER1 induction; represses CREB-mediated transcription of PER1 by phosphorylating and deactivating CRTC1/TORC1. In Rattus norvegicus (Rat), this protein is Serine/threonine-protein kinase SIK1 (Sik1).